The primary structure comprises 243 residues: R-spondin-2 (243 aa).

A signal peptide spans 1-21; it reads MQFRLFSFALIILNCMDYSHC. 11 disulfides stabilise this stretch: cysteine 40/cysteine 46, cysteine 43/cysteine 52, cysteine 55/cysteine 74, cysteine 78/cysteine 93, cysteine 96/cysteine 104, cysteine 101/cysteine 110, cysteine 113/cysteine 124, cysteine 128/cysteine 141, cysteine 145/cysteine 187, cysteine 156/cysteine 163, and cysteine 196/cysteine 203. Residues 90-134 form an FU repeat; it reads MNRCARCRIENCDSCFSKDFCTKCKVGFYLHRGRCFDECPDGFAP. One can recognise a TSP type-1 domain in the interval 144–204; it reads GCEVGHWSEW…RCKMTMRHCP (61 aa). A glycan (N-linked (GlcNAc...) asparagine) is linked at asparagine 160. Residues 204 to 224 show a composition bias toward basic residues; that stretch reads PGGKRTPKAKEKRNKKKKRKL. Residues 204–243 form a disordered region; that stretch reads PGGKRTPKAKEKRNKKKKRKLIERAQEQHSVFLATDRANQ.

The protein belongs to the R-spondin family. As to quaternary structure, interacts with WNT1. Binds heparin. Interacts with LGR4, LGR5 and LGR6. Interacts with E3 ubiquitin ligases RNF43 and ZNRF3.

The protein resides in the secreted. Functionally, activator of the canonical Wnt signaling pathway by acting as a ligand for LGR4-6 receptors. Upon binding to LGR4-6 (LGR4, LGR5 or LGR6), LGR4-6 associate with phosphorylated LRP6 and frizzled receptors that are activated by extracellular Wnt receptors, triggering the canonical Wnt signaling pathway to increase expression of target genes. Also regulates the canonical Wnt/beta-catenin-dependent pathway and non-canonical Wnt signaling by acting as an inhibitor of ZNRF3, an important regulator of the Wnt signaling pathway. During embryonic development, plays a crucial role in limb specification, amplifying the Wnt signaling pathway independently of LGR4-6 receptors, possibly by acting as a direct antagonistic ligand to RNF43 and ZNRF3, hence governing the number of limbs an embryo should form. The sequence is that of R-spondin-2 (RSPO2) from Homo sapiens (Human).